The sequence spans 319 residues: Transmembrane and ubiquitin-like domain-containing protein 2 (319 aa).

A helical transmembrane segment spans residues Val-36–Thr-56. Disordered stretches follow at residues Val-88–Glu-128 and Arg-145–Cys-165. A compositionally biased stretch (basic and acidic residues) spans Pro-95–Glu-111. One can recognise a Ubiquitin-like domain in the interval Ile-173–Ala-246. The next 2 helical transmembrane spans lie at Leu-264–Trp-284 and Ala-298–Gly-318.

The protein localises to the membrane. In Mus musculus (Mouse), this protein is Transmembrane and ubiquitin-like domain-containing protein 2 (Tmub2).